Reading from the N-terminus, the 374-residue chain is dTDP-3-amino-3,4,6-trideoxy-alpha-D-glucose transaminase (374 aa).

Pyridoxal 5'-phosphate is bound by residues Gly-60, Gln-160, 181-186, Tyr-214, Tyr-221, 229-231, and Tyr-316; these read SFYPTK and NSR. The residue at position 186 (Lys-186) is an N6-(pyridoxal phosphate)lysine.

This sequence belongs to the degT/dnrJ/eryC1 family. It depends on pyridoxal 5'-phosphate as a cofactor.

The enzyme catalyses dTDP-3-amino-3,4,6-trideoxy-alpha-D-glucose + 2-oxoglutarate = dTDP-3-dehydro-4,6-dideoxy-alpha-D-glucose + L-glutamate. Its pathway is antibiotic biosynthesis. Functionally, involved in the biosynthesis of the amino sugar dTDP-L-megosamine which is found in the macrolide antibiotic and antiparasitic megalomicin A. Catalyzes the reversible transfer of the amino group from L-glutamate to the C-3 position of dTDP-3-keto-4,6-deoxyglucose to yield dTDP-3-amino-3,4,6-trideoxyglucose. The protein is dTDP-3-amino-3,4,6-trideoxy-alpha-D-glucose transaminase of Micromonospora megalomicea subsp. nigra.